The following is a 342-amino-acid chain: L-threonine 3-dehydrogenase (342 aa).

Cysteine 38 contacts Zn(2+). Residues threonine 40 and histidine 43 each act as charge relay system in the active site. Positions 63, 64, 93, 96, 99, and 107 each coordinate Zn(2+). NAD(+) is bound by residues isoleucine 175, aspartate 195, arginine 200, 262-264 (LGI), and 286-287 (IY).

The protein belongs to the zinc-containing alcohol dehydrogenase family. In terms of assembly, homotetramer. Zn(2+) is required as a cofactor.

Its subcellular location is the cytoplasm. It catalyses the reaction L-threonine + NAD(+) = (2S)-2-amino-3-oxobutanoate + NADH + H(+). It functions in the pathway amino-acid degradation; L-threonine degradation via oxydo-reductase pathway; glycine from L-threonine: step 1/2. Catalyzes the NAD(+)-dependent oxidation of L-threonine to 2-amino-3-ketobutyrate. This chain is L-threonine 3-dehydrogenase, found in Burkholderia vietnamiensis (strain G4 / LMG 22486) (Burkholderia cepacia (strain R1808)).